The sequence spans 504 residues: 2,3-bisphosphoglycerate-independent phosphoglycerate mutase (504 aa).

Mn(2+)-binding residues include Asp11 and Ser61. Ser61 functions as the Phosphoserine intermediate in the catalytic mechanism. Residues His122, 152-153 (RD), Arg183, Arg189, 255-258 (RNDR), and Lys329 each bind substrate. Residues Asp396, His400, Asp437, His438, and His455 each contribute to the Mn(2+) site.

The protein belongs to the BPG-independent phosphoglycerate mutase family. Monomer. The cofactor is Mn(2+).

It carries out the reaction (2R)-2-phosphoglycerate = (2R)-3-phosphoglycerate. It functions in the pathway carbohydrate degradation; glycolysis; pyruvate from D-glyceraldehyde 3-phosphate: step 3/5. Catalyzes the interconversion of 2-phosphoglycerate and 3-phosphoglycerate. In Bacteroides fragilis (strain YCH46), this protein is 2,3-bisphosphoglycerate-independent phosphoglycerate mutase.